We begin with the raw amino-acid sequence, 246 residues long: Probable transcriptional regulatory protein CLB_3102 (246 aa).

This sequence belongs to the TACO1 family.

Its subcellular location is the cytoplasm. The protein is Probable transcriptional regulatory protein CLB_3102 of Clostridium botulinum (strain ATCC 19397 / Type A).